The primary structure comprises 22 residues: Ocellatin-LB1 (22 aa).

Met22 is subject to Methionine amide.

In terms of tissue distribution, expressed by the skin glands.

Its subcellular location is the secreted. Its function is as follows. Antibacterial peptide that inhibits Gram-negative bacteria A.actinomycetemcomitans ATCC 29522 (MIC=222.37 uM) and E.coli ATCC 25922 (MIC=114.04 uM). Also has antifungal activity against C.albicans ATCC 18804 (MIC=233.55 uM) and C.lusitaniae ATCC 56936 (MIC=233.55 uM). No activity against the Gram-positive bacterium S.aureus ATCC 25923. Shows virtually no hemolytic activity towards rabbit erythrocytes. The sequence is that of Ocellatin-LB1 from Leptodactylus labyrinthicus (Labyrinth frog).